The primary structure comprises 90 residues: Small ribosomal subunit protein uS15 (90 aa).

Belongs to the universal ribosomal protein uS15 family. In terms of assembly, part of the 30S ribosomal subunit. Forms a bridge to the 50S subunit in the 70S ribosome, contacting the 23S rRNA.

Functionally, one of the primary rRNA binding proteins, it binds directly to 16S rRNA where it helps nucleate assembly of the platform of the 30S subunit by binding and bridging several RNA helices of the 16S rRNA. In terms of biological role, forms an intersubunit bridge (bridge B4) with the 23S rRNA of the 50S subunit in the ribosome. The sequence is that of Small ribosomal subunit protein uS15 from Campylobacter fetus subsp. fetus (strain 82-40).